The following is a 175-amino-acid chain: Ribosome maturation factor RimM (175 aa).

The region spanning 100-174 (EDEYYWNDVI…VKHKIITVIW (75 aa)) is the PRC barrel domain.

This sequence belongs to the RimM family. Binds ribosomal protein uS19.

Its subcellular location is the cytoplasm. In terms of biological role, an accessory protein needed during the final step in the assembly of 30S ribosomal subunit, possibly for assembly of the head region. Essential for efficient processing of 16S rRNA. May be needed both before and after RbfA during the maturation of 16S rRNA. It has affinity for free ribosomal 30S subunits but not for 70S ribosomes. The protein is Ribosome maturation factor RimM of Buchnera aphidicola subsp. Schizaphis graminum (strain Sg).